The sequence spans 573 residues: Myrcene synthase TPS5FN (573 aa).

Positions 286, 323, 327, 464, and 467 each coordinate (2E)-geranyl diphosphate. Mg(2+) contacts are provided by Asp-323 and Asp-327. A DDXXD motif motif is present at residues 323-327 (DDIFD). Positions 467, 471, and 475 each coordinate Mg(2+).

This sequence belongs to the terpene synthase family. Tpsb subfamily. The cofactor is Mg(2+). Mn(2+) is required as a cofactor. As to expression, expressed in glandular trichomes two to four weeks after flowering onset.

The catalysed reaction is (2E)-geranyl diphosphate = beta-myrcene + diphosphate. The enzyme catalyses (2E)-geranyl diphosphate = (1R,5R)-alpha-pinene + diphosphate. It carries out the reaction (2E)-geranyl diphosphate = sabinene + diphosphate. It catalyses the reaction (2E)-geranyl diphosphate = (4S)-limonene + diphosphate. The catalysed reaction is (2E)-geranyl diphosphate = terpinolene + diphosphate. The enzyme catalyses (2E)-geranyl diphosphate = camphene + diphosphate. The protein operates within secondary metabolite biosynthesis; terpenoid biosynthesis. Its function is as follows. Involved in monoterpene (C10) olefins biosynthesis, constituants of cannabinoids and terpenoids-rich resins. Catalyzes mainly the conversion of (2E)-geranyl diphosphate to beta-myrcene, and also produces minor products such as alpha-pinene, camphene, sabinene, limonene and terpinolene. This Cannabis sativa (Hemp) protein is Myrcene synthase TPS5FN.